Here is a 131-residue protein sequence, read N- to C-terminus: Thioredoxin H4-1 (131 aa).

Residues 3–129 form the Thioredoxin domain; it reads SCVGKERSDE…LEKKVAALAD (127 aa). Catalysis depends on nucleophile residues C55 and C58. C55 and C58 are oxidised to a cystine.

It belongs to the thioredoxin family. Plant H-type subfamily.

It is found in the cytoplasm. In terms of biological role, probable thiol-disulfide oxidoreductase that may be involved in the redox regulation of a number of cytosolic enzymes. The protein is Thioredoxin H4-1 of Oryza sativa subsp. japonica (Rice).